The chain runs to 299 residues: Acetylglutamate kinase (299 aa).

Residues 72 to 73, Arg94, and Asn196 each bind substrate; that span reads GG.

Belongs to the acetylglutamate kinase family. ArgB subfamily.

The protein localises to the cytoplasm. The enzyme catalyses N-acetyl-L-glutamate + ATP = N-acetyl-L-glutamyl 5-phosphate + ADP. The protein operates within amino-acid biosynthesis; L-arginine biosynthesis; N(2)-acetyl-L-ornithine from L-glutamate: step 2/4. In terms of biological role, catalyzes the ATP-dependent phosphorylation of N-acetyl-L-glutamate. The chain is Acetylglutamate kinase from Burkholderia vietnamiensis (strain G4 / LMG 22486) (Burkholderia cepacia (strain R1808)).